The following is a 798-amino-acid chain: Nuclear intron maturase 4, mitochondrial (798 aa).

The transit peptide at 1–16 directs the protein to the mitochondrion; that stretch reads MFRKRNLVLDLLRRCY. Residues 578 to 665 form an intron maturase type-2 region; it reads VVAPTNAIGR…AAKYRIHENE (88 aa). The THAP-type zinc finger occupies 729-778; sequence CFVIGCSMAAPAVYTLHAMERQKFPGWKTGFSVCIPSSLNGRRIGLCKQH.

This sequence belongs to the plant nuclear intron maturase (nMat) family.

The protein localises to the mitochondrion. The protein resides in the plastid. It localises to the chloroplast. Functionally, nuclear-encoded maturase required for splicing of group-II introns in mitochondria. Involved in NAD1 pre-mRNA processing and maturation of introns 1, 3 and 4. Necessary for mitochondrial biogenesis during early developmental stages. Essential for respiratory holocomplex I biogenesis in mitochondria. The sequence is that of Nuclear intron maturase 4, mitochondrial from Arabidopsis thaliana (Mouse-ear cress).